Consider the following 234-residue polypeptide: UPF0758 protein Smal_0281 (234 aa).

The MPN domain occupies 103-225; it reads VGNNPAAVGR…PVSFAERGLL (123 aa). Zn(2+) contacts are provided by histidine 174, histidine 176, and aspartate 187. Positions 174 to 187 match the JAMM motif motif; that stretch reads HNHPSGDPEPSSAD.

The protein belongs to the UPF0758 family.

The protein is UPF0758 protein Smal_0281 of Stenotrophomonas maltophilia (strain R551-3).